The sequence spans 364 residues: Cyclin-D3-2 (364 aa).

The disordered stretch occupies residues 331–364 (PPGRPIKRGAAAATTADPLPADEESRDAWPPYAA). Positions 340–349 (AAAATTADPL) are enriched in low complexity.

This sequence belongs to the cyclin family. Cyclin D subfamily.

The polypeptide is Cyclin-D3-2 (CYCD3-2) (Oryza sativa subsp. japonica (Rice)).